The following is a 317-amino-acid chain: Methionyl-tRNA formyltransferase (317 aa).

112-115 (SLLP) contacts (6S)-5,6,7,8-tetrahydrofolate.

This sequence belongs to the Fmt family.

It carries out the reaction L-methionyl-tRNA(fMet) + (6R)-10-formyltetrahydrofolate = N-formyl-L-methionyl-tRNA(fMet) + (6S)-5,6,7,8-tetrahydrofolate + H(+). Its function is as follows. Attaches a formyl group to the free amino group of methionyl-tRNA(fMet). The formyl group appears to play a dual role in the initiator identity of N-formylmethionyl-tRNA by promoting its recognition by IF2 and preventing the misappropriation of this tRNA by the elongation apparatus. The polypeptide is Methionyl-tRNA formyltransferase (Histophilus somni (strain 129Pt) (Haemophilus somnus)).